Here is a 253-residue protein sequence, read N- to C-terminus: Acidic 26 kDa endochitinase (253 aa).

Positions 1-24 (MKFNIVSPVALSCLFFLFLTGTLA) are cleaved as a signal peptide. Residue glutamate 92 is the Proton donor of the active site. Cysteine 212 and cysteine 244 form a disulfide bridge.

The protein belongs to the glycosyl hydrolase 19 family. Chitinase class II subfamily.

It localises to the secreted. It is found in the extracellular space. It catalyses the reaction Random endo-hydrolysis of N-acetyl-beta-D-glucosaminide (1-&gt;4)-beta-linkages in chitin and chitodextrins.. Its function is as follows. Defense against chitin-containing fungal pathogens. The protein is Acidic 26 kDa endochitinase (CHI3) of Solanum lycopersicum (Tomato).